Here is a 357-residue protein sequence, read N- to C-terminus: Alanine racemase (357 aa).

The active-site Proton acceptor; specific for D-alanine is K35. K35 is modified (N6-(pyridoxal phosphate)lysine). R131 contributes to the substrate binding site. The active-site Proton acceptor; specific for L-alanine is Y256. A substrate-binding site is contributed by M304.

The protein belongs to the alanine racemase family. The cofactor is pyridoxal 5'-phosphate.

The catalysed reaction is L-alanine = D-alanine. It participates in amino-acid biosynthesis; D-alanine biosynthesis; D-alanine from L-alanine: step 1/1. Its function is as follows. Catalyzes the interconversion of L-alanine and D-alanine. May also act on other amino acids. This Legionella pneumophila (strain Paris) protein is Alanine racemase (alr).